A 610-amino-acid polypeptide reads, in one-letter code: uncharacterized protein (610 aa).

The segment covering 1–28 (MDSPSTSESPLKKNTIQDFGESNMTESP) has biased composition (polar residues). The interval 1–36 (MDSPSTSESPLKKNTIQDFGESNMTESPQSKEEIDE) is disordered. The RING-type zinc-finger motif lies at 41–82 (CSVCKNEIIDTTSLSDCCHEFCYDCIVGWLTKGSGPFCPMCK). Disordered regions lie at residues 390–411 (YRGQPQAPLRLGPNATNPFRPA) and 431–515 (TSSA…SADR). Positions 432 to 447 (SSAGAGSARSRGSDSV) are enriched in low complexity. Acidic residues-rich tracts occupy residues 448–470 (VEIDDDDDNDGVDVDDDDREDSD) and 478–487 (SEEDSDEEIQ).

This is an uncharacterized protein from Caenorhabditis elegans.